An 845-amino-acid chain; its full sequence is Ribonucleoside-diphosphate reductase subunit alpha (845 aa).

The ATP-cone domain maps to 1–98 (MHIIKRNGEP…LYRDDRTKKR (98 aa)). Substrate-binding positions include Thr-303, 318 to 319 (SC), Gly-347, 534 to 538 (NLCTE), and 725 to 729 (PTSST). Cys-319 and Cys-574 are joined by a disulfide. The active-site Proton acceptor is the Asn-534. The Cysteine radical intermediate role is filled by Cys-536. Residue Glu-538 is the Proton acceptor of the active site.

Belongs to the ribonucleoside diphosphate reductase large chain family. In terms of assembly, tetramer of two alpha and two beta subunits.

The catalysed reaction is a 2'-deoxyribonucleoside 5'-diphosphate + [thioredoxin]-disulfide + H2O = a ribonucleoside 5'-diphosphate + [thioredoxin]-dithiol. With respect to regulation, under complex allosteric control mediated by deoxynucleoside triphosphates and ATP binding. The type of nucleotide bound at the specificity site determines substrate preference. It seems probable that ATP makes the enzyme reduce CDP and UDP, dGTP favors ADP reduction and dTTP favors GDP reduction. Provides the precursors necessary for DNA synthesis. Catalyzes the biosynthesis of deoxyribonucleotides from the corresponding ribonucleotides. This is Ribonucleoside-diphosphate reductase subunit alpha (nrdA) from Treponema pallidum (strain Nichols).